The following is a 386-amino-acid chain: Patatin (386 aa).

A signal peptide spans 1 to 23; sequence MATTKSFLILFFMILATTSSTCA. Positions 32–229 constitute a PNPLA domain; it reads LSIDGGGIKG…TVGDPALLSL (198 aa). The GXGXXG motif lies at 36–41; it reads GGGIKG. Residues 75-79 carry the GXSXG motif; that stretch reads GTSTG. The active-site Nucleophile is Ser77. An N-linked (GlcNAc...) asparagine glycan is attached at Asn115. Catalysis depends on Asp215, which acts as the Proton acceptor. The DGA/G motif lies at 215 to 217; it reads DGA.

It belongs to the patatin family.

Its subcellular location is the vacuole. Functionally, probable lipolytic acyl hydrolase (LAH), an activity which is thought to be involved in the response of tubers to pathogens. In Solanum tuberosum (Potato), this protein is Patatin.